A 152-amino-acid polypeptide reads, in one-letter code: Large ribosomal subunit protein uL15 (152 aa).

Polar residues predominate over residues 1–13 (MLTLGNLSPQEGS). Residues 1–62 (MLTLGNLSPQ…GGQMPLQRRL (62 aa)) form a disordered region. Basic residues predominate over residues 31–40 (TAGRGHKGFK).

Belongs to the universal ribosomal protein uL15 family. Part of the 50S ribosomal subunit.

Binds to the 23S rRNA. In Desulfotalea psychrophila (strain LSv54 / DSM 12343), this protein is Large ribosomal subunit protein uL15.